A 250-amino-acid polypeptide reads, in one-letter code: Flavin-dependent thymidylate synthase (250 aa).

A ThyX domain is found at L7–T233. DUMP is bound by residues E92–R95, Q103–R107, and R172. Residues R95 to R97 and Q103 contribute to the FAD site. Positions R95 to S105 match the ThyX motif motif. Residues N188 to R190 and H194 each bind FAD. Residue R199 coordinates dUMP. The active-site Involved in ionization of N3 of dUMP, leading to its activation is R199.

Belongs to the thymidylate synthase ThyX family. In terms of assembly, homotetramer. FAD serves as cofactor.

The enzyme catalyses dUMP + (6R)-5,10-methylene-5,6,7,8-tetrahydrofolate + NADPH + H(+) = dTMP + (6S)-5,6,7,8-tetrahydrofolate + NADP(+). It participates in pyrimidine metabolism; dTTP biosynthesis. In terms of biological role, catalyzes the reductive methylation of 2'-deoxyuridine-5'-monophosphate (dUMP) to 2'-deoxythymidine-5'-monophosphate (dTMP) while utilizing 5,10-methylenetetrahydrofolate (mTHF) as the methyl donor, and NADPH and FADH(2) as the reductant. The polypeptide is Flavin-dependent thymidylate synthase (Mycobacterium marinum (strain ATCC BAA-535 / M)).